A 103-amino-acid chain; its full sequence is UPF0145 protein PERMA_0324 (103 aa).

This sequence belongs to the UPF0145 family.

In Persephonella marina (strain DSM 14350 / EX-H1), this protein is UPF0145 protein PERMA_0324.